Here is a 257-residue protein sequence, read N- to C-terminus: Probable enoyl-CoA hydratase (257 aa).

It belongs to the enoyl-CoA hydratase/isomerase family.

It carries out the reaction a (3S)-3-hydroxyacyl-CoA = a (2E)-enoyl-CoA + H2O. The catalysed reaction is a 4-saturated-(3S)-3-hydroxyacyl-CoA = a (3E)-enoyl-CoA + H2O. Its function is as follows. Could possibly oxidize fatty acids using specific components. The protein is Probable enoyl-CoA hydratase (fadB1) of Rhodobacter capsulatus (strain ATCC BAA-309 / NBRC 16581 / SB1003).